The chain runs to 124 residues: Histone H2A (124 aa).

Positions 1–18 (MSGRGKGGKVKGKAKSRS) are enriched in basic residues. The disordered stretch occupies residues 1 to 21 (MSGRGKGGKVKGKAKSRSNRA). At Ser-2 the chain carries N-acetylserine. Phosphoserine is present on Ser-2. Position 36 is an N6-succinyllysine (Lys-36). An N5-methylglutamine modification is found at Gln-104. Lys-119 participates in a covalent cross-link: Glycyl lysine isopeptide (Lys-Gly) (interchain with G-Cter in ubiquitin). Thr-120 bears the Phosphothreonine mark.

It belongs to the histone H2A family. The nucleosome is a histone octamer containing two molecules each of H2A, H2B, H3 and H4 assembled in one H3-H4 heterotetramer and two H2A-H2B heterodimers. The octamer wraps approximately 147 bp of DNA. In terms of processing, the chromatin-associated form, but not the free cytoplasmic form, is phosphorylated on Thr-120 by NHK-1 during mitosis, and dephosphorylated during S-phase. Also phosphorylated on Thr-120 by NHK-1 during prophase I of meiosis; which is required for acetylation of H3 'Lys-14' and H4 'Lys-5', diassembly of the synaptonemal complex, and karyosome formation. Post-translationally, monoubiquitination of Lys-119 by sce/dRING gives a specific tag for epigenetic transcriptional repression. Phosphorylation on Ser-2 is enhanced during mitosis. Phosphorylation on Ser-2 directly represses transcription.

It is found in the nucleus. Its subcellular location is the chromosome. Core component of nucleosome. Nucleosomes wrap and compact DNA into chromatin, limiting DNA accessibility to the cellular machineries which require DNA as a template. Histones thereby play a central role in transcription regulation, DNA repair, DNA replication and chromosomal stability. DNA accessibility is regulated via a complex set of post-translational modifications of histones, also called histone code, and nucleosome remodeling. This is Histone H2A (His2A) from Drosophila erecta (Fruit fly).